The primary structure comprises 422 residues: Histidinol dehydrogenase (422 aa).

The NAD(+) site is built by Tyr123, Gln183, and Asn206. Substrate-binding residues include Ser229, Gln251, and His254. Residues Gln251 and His254 each contribute to the Zn(2+) site. Catalysis depends on proton acceptor residues Glu320 and His321. Residues His321, Asp354, Glu408, and His413 each contribute to the substrate site. Residue Asp354 participates in Zn(2+) binding. Residue His413 coordinates Zn(2+).

Belongs to the histidinol dehydrogenase family. The cofactor is Zn(2+).

The enzyme catalyses L-histidinol + 2 NAD(+) + H2O = L-histidine + 2 NADH + 3 H(+). It participates in amino-acid biosynthesis; L-histidine biosynthesis; L-histidine from 5-phospho-alpha-D-ribose 1-diphosphate: step 9/9. In terms of biological role, catalyzes the sequential NAD-dependent oxidations of L-histidinol to L-histidinaldehyde and then to L-histidine. The protein is Histidinol dehydrogenase of Haloarcula marismortui (strain ATCC 43049 / DSM 3752 / JCM 8966 / VKM B-1809) (Halobacterium marismortui).